Reading from the N-terminus, the 360-residue chain is Methionine import ATP-binding protein MetN (360 aa).

The disordered stretch occupies residues 1–22 (MSHTASTPTPEEYSAQQPSTQG). The ABC transporter domain maps to 25 to 265 (VEFRGITKVF…PQTQVAQKFV (241 aa)). ATP is bound at residue 62-69 (GYSGAGKS).

It belongs to the ABC transporter superfamily. Methionine importer (TC 3.A.1.24) family. In terms of assembly, the complex is composed of two ATP-binding proteins (MetN), two transmembrane proteins (MetI) and a solute-binding protein (MetQ).

The protein localises to the cell membrane. It carries out the reaction L-methionine(out) + ATP + H2O = L-methionine(in) + ADP + phosphate + H(+). The catalysed reaction is D-methionine(out) + ATP + H2O = D-methionine(in) + ADP + phosphate + H(+). Part of the ABC transporter complex MetNIQ involved in methionine import. Responsible for energy coupling to the transport system. The chain is Methionine import ATP-binding protein MetN from Corynebacterium glutamicum (strain ATCC 13032 / DSM 20300 / JCM 1318 / BCRC 11384 / CCUG 27702 / LMG 3730 / NBRC 12168 / NCIMB 10025 / NRRL B-2784 / 534).